Consider the following 511-residue polypeptide: Trafficking protein particle complex subunit 13 homolog (511 aa).

It belongs to the TRAPPC13 family.

The sequence is that of Trafficking protein particle complex subunit 13 homolog from Dictyostelium discoideum (Social amoeba).